The primary structure comprises 294 residues: Lysozyme M1 (294 aa).

The region spanning 81–294 (GVQGIDVSHW…RLLALANNTA (214 aa)) is the Ch-type lysozyme domain. Catalysis depends on residues D86, D175, and E177. C185 and C224 are joined by a disulfide.

The protein belongs to the glycosyl hydrolase 25 family.

Its subcellular location is the secreted. The catalysed reaction is Hydrolysis of (1-&gt;4)-beta-linkages between N-acetylmuramic acid and N-acetyl-D-glucosamine residues in a peptidoglycan and between N-acetyl-D-glucosamine residues in chitodextrins.. In terms of biological role, this enzyme has both lysozyme (acetylmuramidase) and diacetylmuramidase activities. The sequence is that of Lysozyme M1 (acm) from Streptomyces globisporus.